Consider the following 169-residue polypeptide: uncharacterized protein (169 aa).

The Nudix hydrolase domain maps to 28 to 157 (ELHLVIHVCI…EFIPYFFLNQ (130 aa)). The Nudix box signature appears at 65-87 (AGSALKGETSQQAAEREVQEELG). The Mg(2+) site is built by Glu-81 and Glu-85.

This sequence belongs to the Nudix hydrolase family. Mg(2+) is required as a cofactor.

This is an uncharacterized protein from Listeria monocytogenes serovar 1/2a (strain ATCC BAA-679 / EGD-e).